The following is a 308-amino-acid chain: Ribosomal RNA small subunit methyltransferase H (308 aa).

S-adenosyl-L-methionine contacts are provided by residues 36–38, D55, F86, D103, and Q110; that span reads GGH.

Belongs to the methyltransferase superfamily. RsmH family.

Its subcellular location is the cytoplasm. It carries out the reaction cytidine(1402) in 16S rRNA + S-adenosyl-L-methionine = N(4)-methylcytidine(1402) in 16S rRNA + S-adenosyl-L-homocysteine + H(+). Functionally, specifically methylates the N4 position of cytidine in position 1402 (C1402) of 16S rRNA. This Helicobacter pylori (strain Shi470) protein is Ribosomal RNA small subunit methyltransferase H.